Reading from the N-terminus, the 209-residue chain is MARYQGPVCRLCRREGTKLFLKGERCYTDKCAIDKKAYAPGQHGPTRRSKQSEYGMQLREKQKARRIYGVLENQFRRYFREADRKKGITGQTLLRLLETRLDNVVYRMGFAASRAEARQFVNHGHIMVNGKRVNVASYEVKPGDEVVVREKSRDIPRVQELKELAEGYRVPEWLEADHENFTGRVVRYPEREEIDVPVEEHLIVELYSR.

The S4 RNA-binding domain occupies 99 to 164 (TRLDNVVYRM…IPRVQELKEL (66 aa)).

This sequence belongs to the universal ribosomal protein uS4 family. As to quaternary structure, part of the 30S ribosomal subunit. Contacts protein S5. The interaction surface between S4 and S5 is involved in control of translational fidelity.

Functionally, one of the primary rRNA binding proteins, it binds directly to 16S rRNA where it nucleates assembly of the body of the 30S subunit. With S5 and S12 plays an important role in translational accuracy. This chain is Small ribosomal subunit protein uS4, found in Natranaerobius thermophilus (strain ATCC BAA-1301 / DSM 18059 / JW/NM-WN-LF).